We begin with the raw amino-acid sequence, 403 residues long: 8-amino-7-oxononanoate synthase (403 aa).

Arginine 22 contacts substrate. Position 109–110 (109–110 (GF)) interacts with pyridoxal 5'-phosphate. Histidine 134 contributes to the substrate binding site. Pyridoxal 5'-phosphate is bound by residues serine 178, histidine 206, and threonine 232. Lysine 235 is modified (N6-(pyridoxal phosphate)lysine). Threonine 348 contacts substrate. Residues 383–403 (SNDSGSKPSIESSFELKKEAQ) are disordered. Polar residues predominate over residues 385-394 (DSGSKPSIES).

This sequence belongs to the class-II pyridoxal-phosphate-dependent aminotransferase family. BioF subfamily. As to quaternary structure, homodimer. Pyridoxal 5'-phosphate serves as cofactor.

The catalysed reaction is 6-carboxyhexanoyl-[ACP] + L-alanine + H(+) = (8S)-8-amino-7-oxononanoate + holo-[ACP] + CO2. Its pathway is cofactor biosynthesis; biotin biosynthesis. Functionally, catalyzes the decarboxylative condensation of pimeloyl-[acyl-carrier protein] and L-alanine to produce 8-amino-7-oxononanoate (AON), [acyl-carrier protein], and carbon dioxide. This Vibrio atlanticus (strain LGP32) (Vibrio splendidus (strain Mel32)) protein is 8-amino-7-oxononanoate synthase.